A 99-amino-acid polypeptide reads, in one-letter code: Signal recognition particle 19 kDa protein (99 aa).

It belongs to the SRP19 family. Part of the signal recognition particle protein translocation system, which is composed of SRP and FtsY. Archaeal SRP consists of a 7S RNA molecule of 300 nucleotides and two protein subunits: SRP54 and SRP19.

The protein resides in the cytoplasm. Involved in targeting and insertion of nascent membrane proteins into the cytoplasmic membrane. Binds directly to 7S RNA and mediates binding of the 54 kDa subunit of the SRP. The sequence is that of Signal recognition particle 19 kDa protein from Pyrococcus abyssi (strain GE5 / Orsay).